The following is a 296-amino-acid chain: 4-hydroxybenzoate octaprenyltransferase (296 aa).

8 consecutive transmembrane segments (helical) span residues P28–G48, L52–I72, A102–A122, Y146–A166, G169–Y189, V219–F239, L241–W261, and F275–F295.

It belongs to the UbiA prenyltransferase family. It depends on Mg(2+) as a cofactor.

It localises to the cell inner membrane. The enzyme catalyses all-trans-octaprenyl diphosphate + 4-hydroxybenzoate = 4-hydroxy-3-(all-trans-octaprenyl)benzoate + diphosphate. Its pathway is cofactor biosynthesis; ubiquinone biosynthesis. Catalyzes the prenylation of para-hydroxybenzoate (PHB) with an all-trans polyprenyl group. Mediates the second step in the final reaction sequence of ubiquinone-8 (UQ-8) biosynthesis, which is the condensation of the polyisoprenoid side chain with PHB, generating the first membrane-bound Q intermediate 3-octaprenyl-4-hydroxybenzoate. The protein is 4-hydroxybenzoate octaprenyltransferase of Pseudomonas fluorescens (strain SBW25).